The primary structure comprises 401 residues: Heparan-sulfate 6-O-sulfotransferase 1 (401 aa).

The Cytoplasmic segment spans residues 1 to 4; the sequence is MVER. Residues 5–27 form a helical; Signal-anchor for type II membrane protein membrane-spanning segment; it reads ASKFVLVVAGSACFMLILYQYAG. Over 28–401 the chain is Lumenal; the sequence is PGLSLGAPGG…DYMSHIIEKW (374 aa). A 3'-phosphoadenylyl sulfate-binding site is contributed by 83-91; it reads HIQKTGGTT. Residues 113–114, arginine 130, tryptophan 135, and histidine 140 each bind substrate; that span reads KK. The active-site Proton acceptor is histidine 140. Residues arginine 175 and serine 183 each contribute to the 3'-phosphoadenylyl sulfate site. The substrate site is built by histidine 187 and tryptophan 194. Asparagine 254 carries an N-linked (GlcNAc...) asparagine glycan. A 3'-phosphoadenylyl sulfate-binding site is contributed by 307 to 309; the sequence is MQY. Asparagine 310 is a glycosylation site (N-linked (GlcNAc...) asparagine). 3'-phosphoadenylyl sulfate is bound at residue 313–314; the sequence is RA. The interval 367–389 is disordered; the sequence is ERLLHRSKEALPREDTEEPGRVP.

The protein belongs to the sulfotransferase 6 family. In terms of processing, N-glycosylated.

Its subcellular location is the membrane. It carries out the reaction alpha-D-glucosaminyl-[heparan sulfate](n) + 3'-phosphoadenylyl sulfate = 6-sulfo-alpha-D-glucosaminyl-[heparan sulfate](n) + adenosine 3',5'-bisphosphate + H(+). With respect to regulation, inhibited by dithiothreitol and stimulated by protamine. Functionally, 6-O-sulfation enzyme which catalyzes the transfer of sulfate from 3'-phosphoadenosine 5'-phosphosulfate (PAPS) to position 6 of the N-sulfoglucosamine residue (GlcNS) of heparan sulfate. Also transfers sulfate to CDSNS-heparin and performs the crucial step modification in the biosynthesis of anticoagulant heparan sulfate (HSact). Critical for normal neuronal development where it may play a role in neuron branching. May also play a role in limb development. May prefer iduronic acid. The chain is Heparan-sulfate 6-O-sulfotransferase 1 from Cricetulus griseus (Chinese hamster).